The sequence spans 999 residues: Transcription-repair-coupling factor (999 aa).

The 158-residue stretch at 499-656 (DLSSHRVMDR…LSQIKGISSL (158 aa)) folds into the Helicase ATP-binding domain. Residue 512–519 (GDVGFGKT) participates in ATP binding. Positions 609–612 (DEEH) match the DEEH box motif. A Helicase C-terminal domain is found at 677–833 (LLKEIIYREL…SVAYHDLEIR (157 aa)).

In the N-terminal section; belongs to the UvrB family. This sequence in the C-terminal section; belongs to the helicase family. RecG subfamily.

Its subcellular location is the cytoplasm. In terms of biological role, couples transcription and DNA repair by recognizing RNA polymerase (RNAP) stalled at DNA lesions. Mediates ATP-dependent release of RNAP and its truncated transcript from the DNA, and recruitment of nucleotide excision repair machinery to the damaged site. The protein is Transcription-repair-coupling factor of Helicobacter pylori (strain ATCC 700392 / 26695) (Campylobacter pylori).